We begin with the raw amino-acid sequence, 142 residues long: Midkine (142 aa).

An N-terminal signal peptide occupies residues 1–21 (MQPRGLLLLLALLLLAAAAEA). 5 cysteine pairs are disulfide-bonded: C36-C60, C44-C69, C51-C73, C83-C115, and C93-C125.

The protein belongs to the pleiotrophin family.

It is found in the cell surface. The protein resides in the secreted. The protein localises to the extracellular space. Its subcellular location is the extracellular matrix. It localises to the basement membrane. In terms of biological role, has mitogenic activity, and neurite extension activity for PC12 cells. This is Midkine (RIHB) from Gallus gallus (Chicken).